Here is a 260-residue protein sequence, read N- to C-terminus: MFDIGVNLTSTQFAKDREQVVARARDAGVTGLLITGTNALESQQAQRLAEWHPGYCWSTAGVHPHHASAWSAETANTLRRLAESEQVVAIGECGLDFNRNFSAHDQQEYAFDAQLQLAAELQLPVFLHCREAHDRFAAILQPWLPKLVGAVAHCFTGTREELEACLAMGLSIGITGWVCDERRGMELRELLPLIPAERLLLETDAPWLLPRDMHPRPTSRRNEPCFLPHIVQQVALWRNEAAETLGAQVDHNARQLFRLA.

3 residues coordinate a divalent metal cation: Glu-92, His-128, and His-153.

It belongs to the metallo-dependent hydrolases superfamily. TatD-type hydrolase family. TatD subfamily. As to quaternary structure, monomer. Requires Mg(2+) as cofactor.

It is found in the cytoplasm. 3'-5' exonuclease that prefers single-stranded DNA and RNA. May play a role in the H(2)O(2)-induced DNA damage repair. The protein is 3'-5' ssDNA/RNA exonuclease TatD of Pantoea sp. (strain At-9b).